Here is a 179-residue protein sequence, read N- to C-terminus: MELHATTIFAVQHDGKAAMAGDGQVTLGESVVMKHTAKKVRRLFHDKVIAGFAGSVADAFTLFEKFEAKLNEYNGNLERASVELAQQWRSDSVLRKLEAMLIVMDKDTLLLVSGTGEVIEPDDGILAIGSGGNYALAAGRALKRHNGGQMEAKDIARHALEIASEICVFTNDHITVEEL.

Residue Thr6 is part of the active site. Positions 164, 167, and 170 each coordinate Na(+).

The protein belongs to the peptidase T1B family. HslV subfamily. A double ring-shaped homohexamer of HslV is capped on each side by a ring-shaped HslU homohexamer. The assembly of the HslU/HslV complex is dependent on binding of ATP.

The protein resides in the cytoplasm. The catalysed reaction is ATP-dependent cleavage of peptide bonds with broad specificity.. With respect to regulation, allosterically activated by HslU binding. Its function is as follows. Protease subunit of a proteasome-like degradation complex believed to be a general protein degrading machinery. The chain is ATP-dependent protease subunit HslV from Listeria monocytogenes serotype 4b (strain CLIP80459).